A 153-amino-acid chain; its full sequence is Interleukin-4 (153 aa).

The first 24 residues, 1–24 (MGLTSQLLPPLFFLLACAGNFAHG), serve as a signal peptide directing secretion. 3 disulfides stabilise this stretch: Cys27/Cys151, Cys48/Cys89, and Cys70/Cys123. Asn62 is a glycosylation site (N-linked (GlcNAc...) asparagine).

This sequence belongs to the IL-4/IL-13 family.

The protein localises to the secreted. In terms of biological role, participates in at least several B-cell activation processes as well as of other cell types. It is a costimulator of DNA-synthesis. It induces the expression of class II MHC molecules on resting B-cells. It enhances both secretion and cell surface expression of IgE and IgG1. It also regulates the expression of the low affinity Fc receptor for IgE (CD23) on both lymphocytes and monocytes. Positively regulates IL31RA expression in macrophages. Stimulates autophagy in dendritic cells by interfering with mTORC1 signaling and through the induction of RUFY4. In Papio anubis (Olive baboon), this protein is Interleukin-4 (IL4).